Here is a 343-residue protein sequence, read N- to C-terminus: MASNGTSVSPFRSQKNAAMAVNDTPANGHAEPSTITAASKTNTTKITSQNDPQSSFAVKVGLAQMLKGGVIMDVVNAEQARIAEEAGACAVMALERVPADIRKDGGVARMSDPQMIKDIMNAVTIPVMAKSRIGHFVECQILQAIGVDYIDESEVLTPADPVNHIDKSVYNVPFVCGCKNLGEALRRISEGAAMIRTKGEAGTGDVVEAVRHMQTVNAEIAKASSASDADLRMMARELQCDYNLLKQTAQLKRLPVVNFAAGGIATPADAALMMQMGCDGVFVGSGIFKSGDAAKRAKAIVQATTHYNDPKVLAEVSSGLGEAMVGINCDKLPETQKLATRGW.

Residue Asp-73 coordinates D-ribose 5-phosphate. Lys-130 serves as the catalytic Schiff-base intermediate with D-ribose 5-phosphate. Position 202 (Gly-202) interacts with D-ribose 5-phosphate. Gln-214 contributes to the D-glyceraldehyde 3-phosphate binding site. D-ribose 5-phosphate-binding positions include Gly-263 and 284 to 285 (GS).

Belongs to the PdxS/SNZ family.

It carries out the reaction aldehydo-D-ribose 5-phosphate + D-glyceraldehyde 3-phosphate + L-glutamine = pyridoxal 5'-phosphate + L-glutamate + phosphate + 3 H2O + H(+). It functions in the pathway cofactor biosynthesis; pyridoxal 5'-phosphate biosynthesis. Functionally, catalyzes the formation of pyridoxal 5'-phosphate from ribose 5-phosphate (RBP), glyceraldehyde 3-phosphate (G3P) and ammonia. The ammonia is provided by PDX2. Can also use ribulose 5-phosphate and dihydroxyacetone phosphate as substrates, resulting from enzyme-catalyzed isomerization of RBP and G3P, respectively. Also plays an indirect role in resistance to singlet oxygen-generating photosensitizers. This is Pyridoxal 5'-phosphate synthase subunit PDX1 (PDX1) from Cercospora nicotianae (Barn spot disease fungus).